Consider the following 1074-residue polypeptide: Phospholipase D1 (1074 aa).

Residues 81 to 212 (IKAQVLEVER…TEFLDVSQLS (132 aa)) form the PX domain. Residues 219–328 (PKGLEGMIMK…WGGAIEEFIR (110 aa)) enclose the PH domain. Residues Cys-240 and Cys-241 are each lipidated (S-palmitoyl cysteine). The PLD phosphodiesterase 1 domain maps to 459 to 486 (YLWAHHEKLVIIDQSVAFVGGIDLAYGR). A catalytic region spans residues 463-928 (HHEKLVIIDQ…MLGKRDSEMA (466 aa)). Ser-499, Ser-561, and Ser-629 each carry phosphoserine. In terms of domain architecture, PLD phosphodiesterase 2 spans 891 to 918 (ELIYVHSKLLIADDNTVIIGSANINDRS).

The protein belongs to the phospholipase D family. In terms of assembly, interacts with PIP5K1B. In terms of tissue distribution, expressed in kidney, lung, and at a much lower levels, in brain, liver, heart, testis and spleen.

The protein resides in the cytoplasm. The protein localises to the perinuclear region. It is found in the endoplasmic reticulum membrane. Its subcellular location is the golgi apparatus membrane. It localises to the late endosome membrane. It carries out the reaction a 1,2-diacyl-sn-glycero-3-phosphocholine + H2O = a 1,2-diacyl-sn-glycero-3-phosphate + choline + H(+). It catalyses the reaction ethanol + a 1,2-diacyl-sn-glycero-3-phosphocholine = 1,2-diacyl-sn-glycero-3-phosphoethanol + choline. The catalysed reaction is 1,2-dihexadecanoyl-sn-glycero-3-phosphocholine + H2O = 1,2-dihexadecanoyl-sn-glycero-3-phosphate + choline + H(+). Its activity is regulated as follows. Stimulated by phosphatidylinositol 4,5-bisphosphate and phosphatidylinositol 3,4,5-trisphosphate, activated by the phosphokinase C-alpha, by the ADP-ribosylation factor-1 (ARF-1), and to a lesser extent by GTP-binding proteins: RHO A, RAC-1 and CDC42. Inhibited by oleate. Functionally, function as phospholipase selectivefor phosphatidylcholine. Implicated as a critical step in numerous cellular pathways, including signal transduction, membrane trafficking, and the regulation of mitosis. May be involved in the regulation of perinuclear intravesicular membrane traffic. The polypeptide is Phospholipase D1 (Mus musculus (Mouse)).